The chain runs to 170 residues: Lipoprotein signal peptidase (170 aa).

Transmembrane regions (helical) follow at residues 9-29, 72-92, and 96-118; these read FNIF…KYLV, IFFL…SLKE, and IARI…RLFR. Catalysis depends on residues D124 and D146. A helical transmembrane segment spans residues 143 to 163; it reads NFADSYVVIGMILFLVYDFFI.

This sequence belongs to the peptidase A8 family.

It is found in the cell inner membrane. It carries out the reaction Release of signal peptides from bacterial membrane prolipoproteins. Hydrolyzes -Xaa-Yaa-Zaa-|-(S,diacylglyceryl)Cys-, in which Xaa is hydrophobic (preferably Leu), and Yaa (Ala or Ser) and Zaa (Gly or Ala) have small, neutral side chains.. It participates in protein modification; lipoprotein biosynthesis (signal peptide cleavage). Functionally, this protein specifically catalyzes the removal of signal peptides from prolipoproteins. The sequence is that of Lipoprotein signal peptidase from Borreliella afzelii (strain PKo) (Borrelia afzelii).